We begin with the raw amino-acid sequence, 686 residues long: Polyribonucleotide nucleotidyltransferase (686 aa).

Residues aspartate 478 and aspartate 484 each coordinate Mg(2+). The KH domain occupies 545-604 (PRVEVIQIPTDKIGLLIGPGGKTINALQDEYGVNISVENDGTVYVAGVEGMSVKAAVSAI). Positions 614-684 (GDIYVGKVVK…KQNRISLEMV (71 aa)) constitute an S1 motif domain.

The protein belongs to the polyribonucleotide nucleotidyltransferase family. The cofactor is Mg(2+).

It localises to the cytoplasm. The enzyme catalyses RNA(n+1) + phosphate = RNA(n) + a ribonucleoside 5'-diphosphate. Involved in mRNA degradation. Catalyzes the phosphorolysis of single-stranded polyribonucleotides processively in the 3'- to 5'-direction. This Rubrobacter xylanophilus (strain DSM 9941 / JCM 11954 / NBRC 16129 / PRD-1) protein is Polyribonucleotide nucleotidyltransferase.